Consider the following 339-residue polypeptide: DNA-directed RNA polymerase subunit alpha (339 aa).

The segment at 1–233 (MVREEVAGST…DLFLPFLHAE (233 aa)) is alpha N-terminal domain (alpha-NTD). The segment at 266 to 339 (GIPLNCIFID…IDLLKNKLSF (74 aa)) is alpha C-terminal domain (alpha-CTD).

It belongs to the RNA polymerase alpha chain family. In plastids the minimal PEP RNA polymerase catalytic core is composed of four subunits: alpha, beta, beta', and beta''. When a (nuclear-encoded) sigma factor is associated with the core the holoenzyme is formed, which can initiate transcription.

It localises to the plastid. The protein localises to the chloroplast. It carries out the reaction RNA(n) + a ribonucleoside 5'-triphosphate = RNA(n+1) + diphosphate. Its function is as follows. DNA-dependent RNA polymerase catalyzes the transcription of DNA into RNA using the four ribonucleoside triphosphates as substrates. This Aegilops speltoides (Goatgrass) protein is DNA-directed RNA polymerase subunit alpha.